The primary structure comprises 452 residues: Bifunctional protein GlmU (452 aa).

The pyrophosphorylase stretch occupies residues 1–232 (MTARNSLTIV…EDEVRGINTK (232 aa)). Residues 11 to 14 (LAAG), K25, Q78, and 83 to 84 (GT) contribute to the UDP-N-acetyl-alpha-D-glucosamine site. D108 contacts Mg(2+). G144, E158, N173, and N230 together coordinate UDP-N-acetyl-alpha-D-glucosamine. Residue N230 participates in Mg(2+) binding. The tract at residues 233–253 (AQLAEAETVMQTRLRLAAMAA) is linker. The N-acetyltransferase stretch occupies residues 254–452 (GVTLIAPETV…KSRHRKPKAH (199 aa)). Residues R319 and K337 each contribute to the UDP-N-acetyl-alpha-D-glucosamine site. H349 (proton acceptor) is an active-site residue. UDP-N-acetyl-alpha-D-glucosamine-binding residues include Y352 and N363. Residues A366, 372-373 (NY), S391, S409, and R426 contribute to the acetyl-CoA site.

This sequence in the N-terminal section; belongs to the N-acetylglucosamine-1-phosphate uridyltransferase family. In the C-terminal section; belongs to the transferase hexapeptide repeat family. In terms of assembly, homotrimer. Mg(2+) serves as cofactor.

The protein resides in the cytoplasm. It catalyses the reaction alpha-D-glucosamine 1-phosphate + acetyl-CoA = N-acetyl-alpha-D-glucosamine 1-phosphate + CoA + H(+). The catalysed reaction is N-acetyl-alpha-D-glucosamine 1-phosphate + UTP + H(+) = UDP-N-acetyl-alpha-D-glucosamine + diphosphate. It functions in the pathway nucleotide-sugar biosynthesis; UDP-N-acetyl-alpha-D-glucosamine biosynthesis; N-acetyl-alpha-D-glucosamine 1-phosphate from alpha-D-glucosamine 6-phosphate (route II): step 2/2. Its pathway is nucleotide-sugar biosynthesis; UDP-N-acetyl-alpha-D-glucosamine biosynthesis; UDP-N-acetyl-alpha-D-glucosamine from N-acetyl-alpha-D-glucosamine 1-phosphate: step 1/1. It participates in bacterial outer membrane biogenesis; LPS lipid A biosynthesis. Its function is as follows. Catalyzes the last two sequential reactions in the de novo biosynthetic pathway for UDP-N-acetylglucosamine (UDP-GlcNAc). The C-terminal domain catalyzes the transfer of acetyl group from acetyl coenzyme A to glucosamine-1-phosphate (GlcN-1-P) to produce N-acetylglucosamine-1-phosphate (GlcNAc-1-P), which is converted into UDP-GlcNAc by the transfer of uridine 5-monophosphate (from uridine 5-triphosphate), a reaction catalyzed by the N-terminal domain. This chain is Bifunctional protein GlmU, found in Rhodopseudomonas palustris (strain ATCC BAA-98 / CGA009).